Reading from the N-terminus, the 688-residue chain is DNA ligase (688 aa).

NAD(+) contacts are provided by residues 42–46 (DAEYD), 91–92 (SL), and glutamate 128. Lysine 130 functions as the N6-AMP-lysine intermediate in the catalytic mechanism. 4 residues coordinate NAD(+): arginine 151, glutamate 188, lysine 305, and lysine 329. The Zn(2+) site is built by cysteine 423, cysteine 426, cysteine 441, and cysteine 447. The BRCT domain maps to 608–688 (APQGVLAGKT…GMRKLLEGQL (81 aa)).

This sequence belongs to the NAD-dependent DNA ligase family. LigA subfamily. Mg(2+) is required as a cofactor. The cofactor is Mn(2+).

The catalysed reaction is NAD(+) + (deoxyribonucleotide)n-3'-hydroxyl + 5'-phospho-(deoxyribonucleotide)m = (deoxyribonucleotide)n+m + AMP + beta-nicotinamide D-nucleotide.. Functionally, DNA ligase that catalyzes the formation of phosphodiester linkages between 5'-phosphoryl and 3'-hydroxyl groups in double-stranded DNA using NAD as a coenzyme and as the energy source for the reaction. It is essential for DNA replication and repair of damaged DNA. The protein is DNA ligase of Paraburkholderia xenovorans (strain LB400).